The chain runs to 90 residues: Protein LIM3 (90 aa).

A signal peptide spans 1–26 (MAAVKFLVCSVLLVVLATQSEIGLAQ). 4 disulfides stabilise this stretch: Cys-28-Cys-65, Cys-38-Cys-54, Cys-55-Cys-80, and Cys-67-Cys-87.

Belongs to the A9/FIL1 family.

The protein localises to the secreted. This is Protein LIM3 (LIM3) from Lilium longiflorum (Trumpet lily).